The sequence spans 188 residues: UPF0314 protein Sala_3154 (188 aa).

Helical transmembrane passes span T8–G28, W57–M77, and M143–I163.

The protein belongs to the UPF0314 family.

The protein localises to the cell membrane. The polypeptide is UPF0314 protein Sala_3154 (Sphingopyxis alaskensis (strain DSM 13593 / LMG 18877 / RB2256) (Sphingomonas alaskensis)).